The following is a 56-amino-acid chain: Large ribosomal subunit protein uL30 (56 aa).

Belongs to the universal ribosomal protein uL30 family. As to quaternary structure, part of the 50S ribosomal subunit.

The chain is Large ribosomal subunit protein uL30 from Nitratidesulfovibrio vulgaris (strain DSM 19637 / Miyazaki F) (Desulfovibrio vulgaris).